Here is a 552-residue protein sequence, read N- to C-terminus: Dihydroxy-acid dehydratase (552 aa).

Residue D78 coordinates Mg(2+). Position 119 (C119) interacts with [2Fe-2S] cluster. 2 residues coordinate Mg(2+): D120 and K121. The residue at position 121 (K121) is an N6-carboxylysine. C190 lines the [2Fe-2S] cluster pocket. Residue E441 participates in Mg(2+) binding. S467 functions as the Proton acceptor in the catalytic mechanism.

This sequence belongs to the IlvD/Edd family. Homodimer. The cofactor is [2Fe-2S] cluster. It depends on Mg(2+) as a cofactor.

It carries out the reaction (2R)-2,3-dihydroxy-3-methylbutanoate = 3-methyl-2-oxobutanoate + H2O. The catalysed reaction is (2R,3R)-2,3-dihydroxy-3-methylpentanoate = (S)-3-methyl-2-oxopentanoate + H2O. It participates in amino-acid biosynthesis; L-isoleucine biosynthesis; L-isoleucine from 2-oxobutanoate: step 3/4. Its pathway is amino-acid biosynthesis; L-valine biosynthesis; L-valine from pyruvate: step 3/4. Functionally, functions in the biosynthesis of branched-chain amino acids. Catalyzes the dehydration of (2R,3R)-2,3-dihydroxy-3-methylpentanoate (2,3-dihydroxy-3-methylvalerate) into 2-oxo-3-methylpentanoate (2-oxo-3-methylvalerate) and of (2R)-2,3-dihydroxy-3-methylbutanoate (2,3-dihydroxyisovalerate) into 2-oxo-3-methylbutanoate (2-oxoisovalerate), the penultimate precursor to L-isoleucine and L-valine, respectively. This is Dihydroxy-acid dehydratase from Ignicoccus hospitalis (strain KIN4/I / DSM 18386 / JCM 14125).